The primary structure comprises 224 residues: LexA repressor (224 aa).

A DNA-binding region (H-T-H motif) is located at residues 29-49; that stretch reads RAEIARALGFRSPNAAEDHLK. Active-site for autocatalytic cleavage activity residues include Ser142 and Lys179.

This sequence belongs to the peptidase S24 family. Homodimer.

The enzyme catalyses Hydrolysis of Ala-|-Gly bond in repressor LexA.. Functionally, represses a number of genes involved in the response to DNA damage (SOS response), including recA and lexA. In the presence of single-stranded DNA, RecA interacts with LexA causing an autocatalytic cleavage which disrupts the DNA-binding part of LexA, leading to derepression of the SOS regulon and eventually DNA repair. The protein is LexA repressor of Bordetella petrii (strain ATCC BAA-461 / DSM 12804 / CCUG 43448).